The sequence spans 170 residues: UPF0690 protein C1orf52 homolog (170 aa).

Disordered regions lie at residues methionine 1 to leucine 56 and serine 124 to valine 170. Basic and acidic residues predominate over residues aspartate 46 to leucine 56. Residues glutamate 144–glutamine 159 show a composition bias toward acidic residues.

This sequence belongs to the UPF0690 family.

The chain is UPF0690 protein C1orf52 homolog from Xenopus tropicalis (Western clawed frog).